A 1192-amino-acid chain; its full sequence is Protein FAM83H (1192 aa).

5 disordered regions span residues 435-542 (EGMG…VKQG), 557-661 (DGGE…LAEP), 695-720 (SKLEQHNSSQAKSGGELQEEKEESEP), 737-1082 (LSRE…SNII), and 1094-1145 (ILEQ…ERDN). Residues 437 to 447 (MGHDDRGHYDR) show a composition bias toward basic and acidic residues. Composition is skewed to polar residues over residues 523–538 (QLFSTGDQVRQSQDPS) and 629–652 (SDLGPTSTDTLKPAISASSLASST). Basic and acidic residues-rich tracts occupy residues 737 to 759 (LSREPFDWNKHKKADEKDVKHAS) and 768 to 789 (DTKEEPIKEKEKPDNPKPEENK). A compositionally biased stretch (polar residues) spans 790–810 (VTQPTVPSASQQITSSLNMND). Residues 820 to 834 (DQQEKRKTSKLELDL) show a composition bias toward basic and acidic residues. The segment covering 861-878 (TSEQSTVKAQEPTVSQTD) has biased composition (polar residues). Basic and acidic residues-rich tracts occupy residues 880–892 (VPHRPVIETKPKP) and 914–925 (APKKEPVKEPTK). Low complexity predominate over residues 926-946 (SLKPFPSPKFLKPFKSSQSSS). A compositionally biased stretch (basic and acidic residues) spans 994–1005 (ESKDTKALDFLK). A compositionally biased stretch (polar residues) spans 1068–1082 (KPTTSRYQSSTSNII). Over residues 1107 to 1122 (QQNEESGKGDGGKDDV) the composition is skewed to basic and acidic residues.

Belongs to the FAM83 family.

Its subcellular location is the cytoplasm. The protein localises to the cytoskeleton. May play a role in keratin cytoskeleton disassembly. The protein is Protein FAM83H of Danio rerio (Zebrafish).